Consider the following 182-residue polypeptide: Succinate dehydrogenase [ubiquinone] cytochrome b small subunit, mitochondrial (182 aa).

At 1 to 71 (MSLSLLLRGA…SAPRMASAGS (71 aa)) the chain is on the mitochondrial matrix side. The chain crosses the membrane as a helical span at residues 72-96 (SHTLLWTVERIVSAGLLAVIPAAFI). The Mitochondrial intermembrane portion of the chain corresponds to 97 to 101 (APSQV). Residues 102 to 122 (LDALMAISVVIHTHWGVEAMV) traverse the membrane as a helical segment. A heme-binding site is contributed by His-113. Residues 123 to 135 (VDYMRPSVVGNVL) are Mitochondrial matrix-facing. Tyr-125 lines the a ubiquinone pocket. A helical membrane pass occupies residues 136–157 (PKVAHIALIIISVATLGGLFYF). Residues 158-182 (IQNDVGLANGIKRFWAIKGKDAEKA) lie on the Mitochondrial intermembrane side of the membrane.

Belongs to the CybS family. Forms part of complex II containing four subunits: a flavoprotein (FP), an iron-sulfur protein (IP) and a cytochrome b composed of a large and a small subunit.

It is found in the mitochondrion inner membrane. It participates in carbohydrate metabolism; tricarboxylic acid cycle. Functionally, membrane-anchoring subunit of succinate dehydrogenase (SDH) that is involved in complex II of the mitochondrial electron transport chain and is responsible for transferring electrons from succinate to ubiquinone (coenzyme Q). The sequence is that of Succinate dehydrogenase [ubiquinone] cytochrome b small subunit, mitochondrial from Drosophila melanogaster (Fruit fly).